An 84-amino-acid chain; its full sequence is Small ribosomal subunit protein bS18B (84 aa).

It belongs to the bacterial ribosomal protein bS18 family. As to quaternary structure, part of the 30S ribosomal subunit. Forms a tight heterodimer with protein bS6.

Binds as a heterodimer with protein bS6 to the central domain of the 16S rRNA, where it helps stabilize the platform of the 30S subunit. The polypeptide is Small ribosomal subunit protein bS18B (Mycolicibacterium smegmatis (strain ATCC 700084 / mc(2)155) (Mycobacterium smegmatis)).